The sequence spans 126 residues: Glycine cleavage system H protein (126 aa).

The region spanning 21–103 (TVTVGISNHA…YEGGWIARIK (83 aa)) is the Lipoyl-binding domain. N6-lipoyllysine is present on Lys-62.

The protein belongs to the GcvH family. The glycine cleavage system is composed of four proteins: P, T, L and H. Requires (R)-lipoate as cofactor.

The glycine cleavage system catalyzes the degradation of glycine. The H protein shuttles the methylamine group of glycine from the P protein to the T protein. The protein is Glycine cleavage system H protein of Aliivibrio salmonicida (strain LFI1238) (Vibrio salmonicida (strain LFI1238)).